The following is a 440-amino-acid chain: Thymidine phosphorylase (440 aa).

It belongs to the thymidine/pyrimidine-nucleoside phosphorylase family. Homodimer.

It carries out the reaction thymidine + phosphate = 2-deoxy-alpha-D-ribose 1-phosphate + thymine. The protein operates within pyrimidine metabolism; dTMP biosynthesis via salvage pathway; dTMP from thymine: step 1/2. In terms of biological role, the enzymes which catalyze the reversible phosphorolysis of pyrimidine nucleosides are involved in the degradation of these compounds and in their utilization as carbon and energy sources, or in the rescue of pyrimidine bases for nucleotide synthesis. The polypeptide is Thymidine phosphorylase (Salmonella schwarzengrund (strain CVM19633)).